The chain runs to 495 residues: Steroid 21-hydroxylase (495 aa).

Heme b contacts are provided by Arg-92 and Lys-121. A 17alpha-hydroxyprogesterone-binding site is contributed by Arg-234. Progesterone is bound at residue Arg-234. Residues His-366, Arg-427, and Cys-429 each contribute to the heme b site.

This sequence belongs to the cytochrome P450 family. The cofactor is heme b.

The protein localises to the endoplasmic reticulum membrane. It is found in the microsome membrane. It carries out the reaction progesterone + reduced [NADPH--hemoprotein reductase] + O2 = 21-hydroxyprogesterone + oxidized [NADPH--hemoprotein reductase] + H2O + H(+). The enzyme catalyses 17alpha-hydroxyprogesterone + reduced [NADPH--hemoprotein reductase] + O2 = 11-deoxycortisol + oxidized [NADPH--hemoprotein reductase] + H2O + H(+). A cytochrome P450 monooxygenase that plays a major role in adrenal steroidogenesis. Catalyzes the hydroxylation at C-21 of progesterone and 17alpha-hydroxyprogesterone to respectively form 11-deoxycorticosterone and 11-deoxycortisol, intermediate metabolites in the biosynthetic pathway of mineralocorticoids and glucocorticoids. Mechanistically, uses molecular oxygen inserting one oxygen atom into a substrate, and reducing the second into a water molecule, with two electrons provided by NADPH via cytochrome P450 reductase (CPR; NADPH-ferrihemoprotein reductase). The protein is Steroid 21-hydroxylase (CYP21A2) of Homo sapiens (Human).